The following is an 805-amino-acid chain: Hypoxia-inducible factor 1-alpha (805 aa).

The tract at residues Met-1–Ala-26 is disordered. The segment covering Ser-8 to Ala-26 has biased composition (basic and acidic residues). Positions Arg-17–Glu-70 constitute a bHLH domain. PAS domains follow at residues Asp-85–Lys-157 and Pro-229–Gln-300. The 44-residue stretch at Thr-303–Val-346 folds into the PAC domain. 4-hydroxyproline is present on residues Pro-404 and Pro-560. The disordered stretch occupies residues Lys-628–Leu-669. Over residues Glu-629–Pro-648 the composition is skewed to polar residues. The residue at position 782 (Asn-782) is a (3S)-3-hydroxyasparagine.

Efficient DNA binding requires heterodimerization of an alpha and a beta/ARNT subunit. In terms of processing, in normoxia, is hydroxylated on Pro-404 and Pro-560. The hydroxylated prolines promote interaction with VHL, initiating rapid ubiquitination and subsequent proteasomal degradation. Under hypoxia, proline hydroxylation is impaired and ubiquitination is attenuated, resulting in stabilization. In normoxia, is hydroxylated on Asn-782, thus abrogating interaction with CREBBP and EP300 and preventing transcriptional activation. Post-translationally, the iron and 2-oxoglutarate dependent 3-hydroxylation of asparagine is (S) stereospecific within HIF CTAD domains.

Its subcellular location is the cytoplasm. It is found in the nucleus. The protein localises to the nucleus speckle. Its activity is regulated as follows. Induced by reactive oxygen species (ROS). Functionally, functions as a master transcriptional regulator of the adaptive response to hypoxia. Under hypoxic conditions, activates the transcription of over 40 genes, including erythropoietin, glucose transporters, glycolytic enzymes, vascular endothelial growth factor, HILPDA, and other genes whose protein products increase oxygen delivery or facilitate metabolic adaptation to hypoxia. Plays an essential role in embryonic vascularization, tumor angiogenesis and pathophysiology of ischemic disease. The sequence is that of Hypoxia-inducible factor 1-alpha (hif1a) from Xenopus laevis (African clawed frog).